The chain runs to 402 residues: NADH-quinone oxidoreductase subunit D (402 aa).

The protein belongs to the complex I 49 kDa subunit family. NDH-1 is composed of 14 different subunits. Subunits NuoB, C, D, E, F, and G constitute the peripheral sector of the complex.

It localises to the cell inner membrane. It carries out the reaction a quinone + NADH + 5 H(+)(in) = a quinol + NAD(+) + 4 H(+)(out). In terms of biological role, NDH-1 shuttles electrons from NADH, via FMN and iron-sulfur (Fe-S) centers, to quinones in the respiratory chain. The immediate electron acceptor for the enzyme in this species is believed to be ubiquinone. Couples the redox reaction to proton translocation (for every two electrons transferred, four hydrogen ions are translocated across the cytoplasmic membrane), and thus conserves the redox energy in a proton gradient. The sequence is that of NADH-quinone oxidoreductase subunit D from Cereibacter sphaeroides (strain ATCC 17029 / ATH 2.4.9) (Rhodobacter sphaeroides).